Consider the following 458-residue polypeptide: ATP-dependent protease ATPase subunit HslU (458 aa).

ATP contacts are provided by residues V18, 60-65 (GVGKTE), D270, E335, and R407.

It belongs to the ClpX chaperone family. HslU subfamily. A double ring-shaped homohexamer of HslV is capped on each side by a ring-shaped HslU homohexamer. The assembly of the HslU/HslV complex is dependent on binding of ATP.

Its subcellular location is the cytoplasm. Its function is as follows. ATPase subunit of a proteasome-like degradation complex; this subunit has chaperone activity. The binding of ATP and its subsequent hydrolysis by HslU are essential for unfolding of protein substrates subsequently hydrolyzed by HslV. HslU recognizes the N-terminal part of its protein substrates and unfolds these before they are guided to HslV for hydrolysis. This Desulfitobacterium hafniense (strain DSM 10664 / DCB-2) protein is ATP-dependent protease ATPase subunit HslU.